The primary structure comprises 866 residues: Thiamine diphosphate dependent-3-acetyloctanal synthase PigD (866 aa).

The interval 826 to 866 (KGWQRDPSDREALQERKDWAARQPESTSTSFDQGQNKEAIS) is disordered. Positions 828–845 (WQRDPSDREALQERKDWA) are enriched in basic and acidic residues. The segment covering 849 to 866 (PESTSTSFDQGQNKEAIS) has biased composition (polar residues).

This sequence belongs to the TPP enzyme family. The cofactor is thiamine diphosphate.

It carries out the reaction (2E)-octenal + pyruvate + H(+) = (S)-3-acetyloctanal + CO2. Its pathway is antibiotic biosynthesis; prodigiosin biosynthesis. Involved in the biosynthesis of 2-methyl-3-n-amyl-pyrrole (MAP), one of the terminal products involved in the biosynthesis of the red antibiotic prodigiosin (Pig). Catalyzes the decarboxylation of pyruvate, followed by the modification of the resulting two-carbon fragment acetaldehyde at the C3 position of the 2-octenal (1,2-addition of acetaldehyde) giving 3-acetyloctanal. The polypeptide is Thiamine diphosphate dependent-3-acetyloctanal synthase PigD (Serratia sp. (strain ATCC 39006) (Prodigiosinella confusarubida)).